The chain runs to 331 residues: Lipoyl synthase (331 aa).

[4Fe-4S] cluster contacts are provided by Cys57, Cys62, Cys68, Cys83, Cys87, Cys90, and Ser294. The region spanning 69–283 (WEDREATFLI…KAEAEAIGFL (215 aa)) is the Radical SAM core domain.

This sequence belongs to the radical SAM superfamily. Lipoyl synthase family. [4Fe-4S] cluster is required as a cofactor.

It localises to the cytoplasm. It catalyses the reaction [[Fe-S] cluster scaffold protein carrying a second [4Fe-4S](2+) cluster] + N(6)-octanoyl-L-lysyl-[protein] + 2 oxidized [2Fe-2S]-[ferredoxin] + 2 S-adenosyl-L-methionine + 4 H(+) = [[Fe-S] cluster scaffold protein] + N(6)-[(R)-dihydrolipoyl]-L-lysyl-[protein] + 4 Fe(3+) + 2 hydrogen sulfide + 2 5'-deoxyadenosine + 2 L-methionine + 2 reduced [2Fe-2S]-[ferredoxin]. It participates in protein modification; protein lipoylation via endogenous pathway; protein N(6)-(lipoyl)lysine from octanoyl-[acyl-carrier-protein]: step 2/2. Catalyzes the radical-mediated insertion of two sulfur atoms into the C-6 and C-8 positions of the octanoyl moiety bound to the lipoyl domains of lipoate-dependent enzymes, thereby converting the octanoylated domains into lipoylated derivatives. In Clavibacter michiganensis subsp. michiganensis (strain NCPPB 382), this protein is Lipoyl synthase.